The primary structure comprises 176 residues: Thiol:disulfide interchange protein HelX (176 aa).

An N-terminal signal peptide occupies residues 1–19 (MAKPLMFLPLLVMAGFVGA). The Thioredoxin domain maps to 35 to 172 (ALAGKEAPAV…ITKKIDPLLA (138 aa)). Cys75 and Cys78 are joined by a disulfide.

This sequence belongs to the thioredoxin family. DsbE subfamily.

The protein localises to the periplasm. Required for disulfide bond formation in some periplasmic proteins. Also acts as a disulfide oxidoreductase in cytochromes c biogenesis. The cysteines of apocytochromes c must be in the reduced state for covalent linkage between the two moieties to occur. The chain is Thiol:disulfide interchange protein HelX (helX) from Rhodobacter capsulatus (strain ATCC BAA-309 / NBRC 16581 / SB1003).